Here is a 244-residue protein sequence, read N- to C-terminus: MTTKNTSGRGQRELRVRVKTAKGRKLSSTLWLERQLNDPYVIRAKKEGYRGRAAYKILELDDKFGFLKPGGRVVDLGCAPGGWCQVAVERVNALGQKKNKPEGTVLGVDLQEVEPISGAEIHQLDFLSDDADEKVKGWLGGRADVVMSDMAAAASGHKGTDHLRIIALCEAAAAFAFDVLEEGGTFVAKVLAGGAENELQALLKKNFTKVANVKPPASRADSSEKFVVAMGFRGRASEPEEGEA.

Residues G81, W83, D109, D125, and D149 each coordinate S-adenosyl-L-methionine. The active-site Proton acceptor is K189.

It belongs to the class I-like SAM-binding methyltransferase superfamily. RNA methyltransferase RlmE family.

The protein resides in the cytoplasm. It carries out the reaction uridine(2552) in 23S rRNA + S-adenosyl-L-methionine = 2'-O-methyluridine(2552) in 23S rRNA + S-adenosyl-L-homocysteine + H(+). In terms of biological role, specifically methylates the uridine in position 2552 of 23S rRNA at the 2'-O position of the ribose in the fully assembled 50S ribosomal subunit. The chain is Ribosomal RNA large subunit methyltransferase E from Cereibacter sphaeroides (strain ATCC 17023 / DSM 158 / JCM 6121 / CCUG 31486 / LMG 2827 / NBRC 12203 / NCIMB 8253 / ATH 2.4.1.) (Rhodobacter sphaeroides).